Reading from the N-terminus, the 150-residue chain is UPF0208 membrane protein VS_0999 (150 aa).

2 helical membrane passes run 42 to 62 and 70 to 90; these read FGVK…MVFN and AVVM…WLGN.

Belongs to the UPF0208 family.

Its subcellular location is the cell inner membrane. The polypeptide is UPF0208 membrane protein VS_0999 (Vibrio atlanticus (strain LGP32) (Vibrio splendidus (strain Mel32))).